The sequence spans 164 residues: Ribosome maturation factor RimP (164 aa).

Belongs to the RimP family.

It localises to the cytoplasm. In terms of biological role, required for maturation of 30S ribosomal subunits. This is Ribosome maturation factor RimP from Cellvibrio japonicus (strain Ueda107) (Pseudomonas fluorescens subsp. cellulosa).